The primary structure comprises 444 residues: Argininosuccinate synthase (444 aa).

ATP contacts are provided by residues 18–26 (AFSGGLDTS) and Ala44. Tyr100 is an L-citrulline binding site. ATP contacts are provided by Gly130 and Thr132. 3 residues coordinate L-aspartate: Thr132, Asn136, and Asp137. Asn136 is a binding site for L-citrulline. Asp137 lines the ATP pocket. 2 residues coordinate L-citrulline: Arg140 and Ser193. Asp195 contributes to the ATP binding site. L-citrulline is bound by residues Thr202, Glu204, and Glu281.

This sequence belongs to the argininosuccinate synthase family. Type 2 subfamily. Homotetramer.

The protein resides in the cytoplasm. The enzyme catalyses L-citrulline + L-aspartate + ATP = 2-(N(omega)-L-arginino)succinate + AMP + diphosphate + H(+). It functions in the pathway amino-acid biosynthesis; L-arginine biosynthesis; L-arginine from L-ornithine and carbamoyl phosphate: step 2/3. The sequence is that of Argininosuccinate synthase from Haemophilus influenzae (strain PittEE).